Reading from the N-terminus, the 871-residue chain is Translation initiation factor IF-2 (871 aa).

Disordered regions lie at residues 60–101 (KKNI…QEVK) and 184–203 (ESLKKKKKEKKSFVASKKES). Basic residues predominate over residues 61–72 (KNIKTPTAKKPK). Over residues 73–101 (KENIKEQEKLNESEKKEPKKEEKLKQEVK) the composition is skewed to basic and acidic residues. The 168-residue stretch at 370–537 (TRAPVITIMG…IVLLQADILE (168 aa)) folds into the tr-type G domain. Residues 379–386 (GHVDHGKT) form a G1 region. GTP is bound at residue 379 to 386 (GHVDHGKT). Positions 404–408 (GITQH) are G2. The tract at residues 425 to 428 (DTPG) is G3. GTP-binding positions include 425 to 429 (DTPGH) and 479 to 482 (NKMD). Positions 479–482 (NKMD) are G4. The interval 515 to 517 (SAK) is G5.

This sequence belongs to the TRAFAC class translation factor GTPase superfamily. Classic translation factor GTPase family. IF-2 subfamily.

The protein localises to the cytoplasm. Functionally, one of the essential components for the initiation of protein synthesis. Protects formylmethionyl-tRNA from spontaneous hydrolysis and promotes its binding to the 30S ribosomal subunits. Also involved in the hydrolysis of GTP during the formation of the 70S ribosomal complex. The sequence is that of Translation initiation factor IF-2 from Campylobacter jejuni (strain RM1221).